The primary structure comprises 335 residues: Glucan endo-1,3-beta-glucosidase, acidic isoform (335 aa).

Positions 1-29 (MARQGVIASMHALALLLGAFAAIPTGVQS) are cleaved as a signal peptide. The Proton donor role is filled by glutamate 122. The active-site Nucleophile is glutamate 259.

It belongs to the glycosyl hydrolase 17 family. As to expression, accumulates in aleurone layers. Much lower levels are found in the embryo, and none in starchy endosperm.

It is found in the secreted. The protein localises to the extracellular space. The catalysed reaction is Hydrolysis of (1-&gt;3)-beta-D-glucosidic linkages in (1-&gt;3)-beta-D-glucans.. In terms of biological role, is thought to be an important plant defense-related product against fungal pathogens. This is Glucan endo-1,3-beta-glucosidase, acidic isoform from Zea mays (Maize).